We begin with the raw amino-acid sequence, 273 residues long: Shikimate dehydrogenase (NADP(+)) (273 aa).

Shikimate is bound by residues 19-21 (SKS) and T66. Catalysis depends on K70, which acts as the Proton acceptor. Residues N91 and D107 each coordinate shikimate. Residues 131–135 (GAGGA) and M218 contribute to the NADP(+) site. A shikimate-binding site is contributed by Y220. Residue G242 participates in NADP(+) binding.

This sequence belongs to the shikimate dehydrogenase family. As to quaternary structure, homodimer.

It catalyses the reaction shikimate + NADP(+) = 3-dehydroshikimate + NADPH + H(+). It participates in metabolic intermediate biosynthesis; chorismate biosynthesis; chorismate from D-erythrose 4-phosphate and phosphoenolpyruvate: step 4/7. In terms of biological role, involved in the biosynthesis of the chorismate, which leads to the biosynthesis of aromatic amino acids. Catalyzes the reversible NADPH linked reduction of 3-dehydroshikimate (DHSA) to yield shikimate (SA). The sequence is that of Shikimate dehydrogenase (NADP(+)) from Buchnera aphidicola subsp. Acyrthosiphon pisum (strain 5A).